The chain runs to 754 residues: uncharacterized protein (754 aa).

Transmembrane regions (helical) follow at residues 3–23 (ITTV…LPQL), 24–44 (PGTL…FIPV), 50–70 (IALT…ILWA), 223–243 (HLMA…AGLI), 254–274 (WIHW…YAWL), 320–340 (VAIL…LIFW), 370–390 (LLLM…SFIA), 392–412 (LLAI…AMVV), 446–466 (WINI…LLVV), and 471–491 (AWRT…WPLW).

The protein to B.subtilis ComEC, N.gonorrhoeae ComA, and H.influenzae Rec2.

It is found in the cell membrane. This is an uncharacterized protein from Escherichia coli (strain K12).